We begin with the raw amino-acid sequence, 94 residues long: C-C motif chemokine 26 (94 aa).

An N-terminal signal peptide occupies residues 1-23 (MKSFPVAFLVLLIFILSVHRGVT). Cystine bridges form between C33-C57 and C34-C73.

This sequence belongs to the intercrine beta (chemokine CC) family. As to quaternary structure, monomer.

The protein resides in the secreted. In terms of biological role, chemoattractant for eosinophils and basophils. Acts as a ligand for C-C chemokine receptor CCR3 which triggers Ca(2+) mobilization in eosinophils. Also acts as a ligand for CX3C chemokine receptor CX3CR1, inducing cell chemotaxis. The sequence is that of C-C motif chemokine 26 from Canis lupus familiaris (Dog).